The chain runs to 263 residues: uncharacterized protein (263 aa).

Residue 13–20 (TGSTSGIG) participates in NADP(+) binding. Ser141 provides a ligand contact to substrate. The active-site Proton acceptor is Tyr154.

Belongs to the short-chain dehydrogenases/reductases (SDR) family.

This is an uncharacterized protein from Bacillus subtilis (strain 168).